A 339-amino-acid polypeptide reads, in one-letter code: DNA-directed RNA polymerase subunit alpha (339 aa).

An alpha N-terminal domain (alpha-NTD) region spans residues 1-233 (MVREEITGST…DLFLPFIHTE (233 aa)). The tract at residues 266–339 (GIPLNCIFID…IDLPKNKFSL (74 aa)) is alpha C-terminal domain (alpha-CTD).

The protein belongs to the RNA polymerase alpha chain family. In plastids the minimal PEP RNA polymerase catalytic core is composed of four subunits: alpha, beta, beta', and beta''. When a (nuclear-encoded) sigma factor is associated with the core the holoenzyme is formed, which can initiate transcription.

It is found in the plastid. Its subcellular location is the chloroplast. It carries out the reaction RNA(n) + a ribonucleoside 5'-triphosphate = RNA(n+1) + diphosphate. In terms of biological role, DNA-dependent RNA polymerase catalyzes the transcription of DNA into RNA using the four ribonucleoside triphosphates as substrates. This is DNA-directed RNA polymerase subunit alpha from Sorghum bicolor (Sorghum).